A 354-amino-acid polypeptide reads, in one-letter code: Protein RecA (354 aa).

65-72 is an ATP binding site; sequence GPESSGKT.

Belongs to the RecA family.

The protein localises to the cytoplasm. Can catalyze the hydrolysis of ATP in the presence of single-stranded DNA, the ATP-dependent uptake of single-stranded DNA by duplex DNA, and the ATP-dependent hybridization of homologous single-stranded DNAs. It interacts with LexA causing its activation and leading to its autocatalytic cleavage. This chain is Protein RecA, found in Vibrio cholerae serotype O1 (strain ATCC 39315 / El Tor Inaba N16961).